The following is a 546-amino-acid chain: Putative inactive G-type lectin S-receptor-like serine/threonine-protein kinase SRK (546 aa).

Positions 1–31 (MRGELPNKHHSYTFFVFLFFFLILFPDLSIS) are cleaved as a signal peptide. The Extracellular segment spans residues 32–441 (VNTLSATESL…FGERRTIRGK (410 aa)). Positions 34 to 154 (TLSATESLTI…KINESDEFLW (121 aa)) constitute a Bulb-type lectin domain. N46, N120, N147, and N243 each carry an N-linked (GlcNAc...) asparagine glycan. The EGF-like; atypical domain occupies 293–329 (PKDTCDLYGICGPYAYCDMSTSPTCNCIKGFQPLSPQ). Intrachain disulfides connect C297–C309, C303–C317, C378–C403, and C382–C388. Residues 348–428 (CGEDRFFRLM…DGQDLFVRLA (81 aa)) enclose the PAN domain. N-linked (GlcNAc...) asparagine glycosylation occurs at N387. The helical transmembrane segment at 442 to 462 (IIGLIIGISLMLVLSFIIYCF) threads the bilayer. At 463–546 (WKKKQKRARA…IVYKGRLLDG (84 aa)) the chain is on the cytoplasmic side. In terms of domain architecture, Protein kinase spans 524–546 (FSDSNILGRGGFGIVYKGRLLDG). 530–538 (LGRGGFGIV) lines the ATP pocket.

Belongs to the protein kinase superfamily. Ser/Thr protein kinase family.

The protein localises to the cell membrane. Truncated and inactivated form of SRK, the female specificity determinant of self-incompatibility when active. Most A.thaliana cultivars contain such an inactive form and thus, are self-fertiles. The sequence is that of Putative inactive G-type lectin S-receptor-like serine/threonine-protein kinase SRK (PSEUDOSRKA) from Arabidopsis thaliana (Mouse-ear cress).